Consider the following 876-residue polypeptide: Leucine--tRNA ligase (876 aa).

The 'HIGH' region signature appears at 43–53 (PYPSGRIHIGH). Residues 632–636 (KMSKS) carry the 'KMSKS' region motif. K635 provides a ligand contact to ATP.

Belongs to the class-I aminoacyl-tRNA synthetase family.

The protein localises to the cytoplasm. The catalysed reaction is tRNA(Leu) + L-leucine + ATP = L-leucyl-tRNA(Leu) + AMP + diphosphate. In Allorhizobium ampelinum (strain ATCC BAA-846 / DSM 112012 / S4) (Agrobacterium vitis (strain S4)), this protein is Leucine--tRNA ligase.